A 275-amino-acid polypeptide reads, in one-letter code: Formamidopyrimidine-DNA glycosylase (275 aa).

The Schiff-base intermediate with DNA role is filled by proline 2. Glutamate 3 acts as the Proton donor in catalysis. Lysine 58 functions as the Proton donor; for beta-elimination activity in the catalytic mechanism. DNA-binding residues include histidine 91, arginine 109, and arginine 154. An FPG-type zinc finger spans residues 240 to 274 (AVYERAGLPCRVCGTPIRRLVQGQRATYYCPSCQK). Arginine 264 serves as the catalytic Proton donor; for delta-elimination activity.

The protein belongs to the FPG family. As to quaternary structure, monomer. Zn(2+) serves as cofactor.

It carries out the reaction Hydrolysis of DNA containing ring-opened 7-methylguanine residues, releasing 2,6-diamino-4-hydroxy-5-(N-methyl)formamidopyrimidine.. The enzyme catalyses 2'-deoxyribonucleotide-(2'-deoxyribose 5'-phosphate)-2'-deoxyribonucleotide-DNA = a 3'-end 2'-deoxyribonucleotide-(2,3-dehydro-2,3-deoxyribose 5'-phosphate)-DNA + a 5'-end 5'-phospho-2'-deoxyribonucleoside-DNA + H(+). Involved in base excision repair of DNA damaged by oxidation or by mutagenic agents. Acts as a DNA glycosylase that recognizes and removes damaged bases. Has a preference for oxidized purines, such as 7,8-dihydro-8-oxoguanine (8-oxoG). Has AP (apurinic/apyrimidinic) lyase activity and introduces nicks in the DNA strand. Cleaves the DNA backbone by beta-delta elimination to generate a single-strand break at the site of the removed base with both 3'- and 5'-phosphates. This Bordetella petrii (strain ATCC BAA-461 / DSM 12804 / CCUG 43448) protein is Formamidopyrimidine-DNA glycosylase.